Here is a 390-residue protein sequence, read N- to C-terminus: tRNA (guanine(26)-N(2))-dimethyltransferase (390 aa).

Positions His-4 to Ile-378 constitute a Trm1 methyltransferase domain. Residues Arg-37, Arg-67, Asp-85, Asp-112, and Ala-113 each coordinate S-adenosyl-L-methionine. Residues Cys-245, Cys-248, Cys-265, and Cys-268 each contribute to the Zn(2+) site.

This sequence belongs to the class I-like SAM-binding methyltransferase superfamily. Trm1 family.

The catalysed reaction is guanosine(26) in tRNA + 2 S-adenosyl-L-methionine = N(2)-dimethylguanosine(26) in tRNA + 2 S-adenosyl-L-homocysteine + 2 H(+). Dimethylates a single guanine residue at position 26 of a number of tRNAs using S-adenosyl-L-methionine as donor of the methyl groups. The protein is tRNA (guanine(26)-N(2))-dimethyltransferase of Methanosphaera stadtmanae (strain ATCC 43021 / DSM 3091 / JCM 11832 / MCB-3).